A 329-amino-acid chain; its full sequence is Olfactory receptor 10J3 (329 aa).

The Extracellular portion of the chain corresponds to 1–26 (MPKLNSTFVTEFLFEGFSSFRRQHKL). The N-linked (GlcNAc...) asparagine glycan is linked to Asn-5. A helical transmembrane segment spans residues 27-47 (VFFVVFLTLYLLTLSGNVIIM). Over 48 to 55 (TIIRLDHH) the chain is Cytoplasmic. A helical transmembrane segment spans residues 56 to 76 (LHTPMYFFLCMLSISETCYTV). At 77–100 (AIIPHMLSGLLNPHQPIATQSCAT) the chain is on the extracellular side. A disulfide bridge connects residues Cys-98 and Cys-190. Residues 101–121 (QLFFYLTFGINNCFLLTVMGY) form a helical membrane-spanning segment. The Cytoplasmic portion of the chain corresponds to 122–140 (DRYVAICNPLRYSVIMGKR). The chain crosses the membrane as a helical span at residues 141–161 (ACIQLASGSLGIGLGMAIVQV). Over 162–198 (TSVFGLPFCDAFVISHFFCDVRHLLKLACTDTTVNEI) the chain is Extracellular. Residues 199 to 218 (INFVVSVCVLVLPMGLVFIS) traverse the membrane as a helical segment. At 219 to 238 (YVLIISTILKIASAEGQKKA) the chain is on the cytoplasmic side. Residues 239–259 (FATCASHLTVVIIHYGCASII) traverse the membrane as a helical segment. At 260 to 272 (YLKPKSQSSLGQD) the chain is on the extracellular side. A helical transmembrane segment spans residues 273 to 293 (RLISVTYTHHSPTEPCCVQPE). At 294-329 (EQGGQRCSAQSRGAKNSVSLMKRGCEGFSFAFINMY) the chain is on the cytoplasmic side.

This sequence belongs to the G-protein coupled receptor 1 family.

Its subcellular location is the cell membrane. Functionally, odorant receptor. This Homo sapiens (Human) protein is Olfactory receptor 10J3 (OR10J3).